The following is a 128-amino-acid chain: SESSAKKFERQHMDSRGSPSTNPNYCNEMMKSRNMTQGRCKPVNTFVHEPLADVQAVCFQKNVLCKNGQTNCYQSNSNMHITDCRVTSNSDYPNCSYRTSQEEKSIVVACEGNPYVPVHFDASVAASA.

Positions 1 to 15 (SESSAKKFERQHMDS) are enriched in basic and acidic residues. The disordered stretch occupies residues 1-28 (SESSAKKFERQHMDSRGSPSTNPNYCNE). Residues K7 and R10 each coordinate substrate. The Proton acceptor role is filled by H12. Disulfide bonds link C26–C84, C40–C95, C58–C110, and C65–C72. N34 carries N-linked (GlcNAc...) asparagine glycosylation. Substrate contacts are provided by residues 41-45 (KPVNT), K66, and R85. H119 acts as the Proton donor in catalysis.

It belongs to the pancreatic ribonuclease family. Monomer. Interacts with and forms tight 1:1 complexes with RNH1. Dimerization of two such complexes may occur. Interaction with RNH1 inhibits this protein. As to expression, pancreas.

It localises to the secreted. The enzyme catalyses an [RNA] containing cytidine + H2O = an [RNA]-3'-cytidine-3'-phosphate + a 5'-hydroxy-ribonucleotide-3'-[RNA].. It carries out the reaction an [RNA] containing uridine + H2O = an [RNA]-3'-uridine-3'-phosphate + a 5'-hydroxy-ribonucleotide-3'-[RNA].. Functionally, endonuclease that catalyzes the cleavage of RNA on the 3' side of pyrimidine nucleotides. Acts on single-stranded and double-stranded RNA. This Myocastor coypus (Coypu) protein is Ribonuclease pancreatic (RNASE1).